The sequence spans 246 residues: MFFAVITLFPEMFEAITAYGISGRAAKRDIVQVTCINPRDFAEGSYRRVDERPFGGGPGMVMMAEPLAKAINHAKQLASQAGCVHVPVVYMSPQGKTLNEQAVQQFVDYDGLIVLCGRYEGVDERLIQHYVDQEWSIGDYVLSGGELPAMVLLDSIIRRLPNVMSDEQSAIQDSFVDGLLDCPQYTKPDQFEGLDVPEILKSGHHANIEKWRFLQRYQRTLERRPELIEQVTLTKQQKKWLSDEQG.

S-adenosyl-L-methionine-binding positions include glycine 117 and 137-142; that span reads IGDYVL.

It belongs to the RNA methyltransferase TrmD family. Homodimer.

The protein localises to the cytoplasm. The enzyme catalyses guanosine(37) in tRNA + S-adenosyl-L-methionine = N(1)-methylguanosine(37) in tRNA + S-adenosyl-L-homocysteine + H(+). Specifically methylates guanosine-37 in various tRNAs. The sequence is that of tRNA (guanine-N(1)-)-methyltransferase from Acinetobacter baumannii (strain SDF).